The primary structure comprises 288 residues: Syntaxin-1B (288 aa).

Residues 1 to 13 (MKDRTQELRSAKD) show a composition bias toward basic and acidic residues. The segment at 1–20 (MKDRTQELRSAKDSDDEEEV) is disordered. Over 1-264 (MKDRTQELRS…KYQSKARRKK (264 aa)) the chain is Cytoplasmic. Phosphoserine occurs at positions 10 and 14. A coiled-coil region spans residues 29-104 (MDEFFEQVEE…IEQSIEQEEG (76 aa)). The region spanning 191–253 (LNEIETRHNE…ERAVSDTKKA (63 aa)) is the t-SNARE coiled-coil homology domain. A helical; Anchor for type IV membrane protein transmembrane segment spans residues 265 to 288 (IMIIICCVVLGVVLASSIGGTLGL).

The protein belongs to the syntaxin family. Interacts with OTOF. Interacts with SYT6 and SYT8; the interaction is Ca(2+)-dependent. In terms of processing, phosphorylated by CK2. Post-translationally, (Microbial infection) Targeted and hydrolyzed by C.botulinum neurotoxin type C (BoNT/C); cleavage by BoNT/C inhibits neurotransmitter release. Probably hydrolyzes the 252-Lys-|-Ala-253 bond.

It localises to the membrane. Its function is as follows. Potentially involved in docking of synaptic vesicles at presynaptic active zones. May mediate Ca(2+)-regulation of exocytosis acrosomal reaction in sperm. This chain is Syntaxin-1B (STX1B), found in Bos taurus (Bovine).